The primary structure comprises 406 residues: Tryptophan synthase beta chain (406 aa).

Lys99 bears the N6-(pyridoxal phosphate)lysine mark.

The protein belongs to the TrpB family. Tetramer of two alpha and two beta chains. It depends on pyridoxal 5'-phosphate as a cofactor.

It carries out the reaction (1S,2R)-1-C-(indol-3-yl)glycerol 3-phosphate + L-serine = D-glyceraldehyde 3-phosphate + L-tryptophan + H2O. The protein operates within amino-acid biosynthesis; L-tryptophan biosynthesis; L-tryptophan from chorismate: step 5/5. In terms of biological role, the beta subunit is responsible for the synthesis of L-tryptophan from indole and L-serine. The chain is Tryptophan synthase beta chain from Methylobacterium sp. (strain 4-46).